We begin with the raw amino-acid sequence, 115 residues long: NAD(P)H-quinone oxidoreductase subunit M (115 aa).

The protein belongs to the complex I NdhM subunit family. NDH-1 can be composed of about 15 different subunits; different subcomplexes with different compositions have been identified which probably have different functions.

It is found in the cellular thylakoid membrane. It carries out the reaction a plastoquinone + NADH + (n+1) H(+)(in) = a plastoquinol + NAD(+) + n H(+)(out). The catalysed reaction is a plastoquinone + NADPH + (n+1) H(+)(in) = a plastoquinol + NADP(+) + n H(+)(out). Functionally, NDH-1 shuttles electrons from an unknown electron donor, via FMN and iron-sulfur (Fe-S) centers, to quinones in the respiratory and/or the photosynthetic chain. The immediate electron acceptor for the enzyme in this species is believed to be plastoquinone. Couples the redox reaction to proton translocation, and thus conserves the redox energy in a proton gradient. Cyanobacterial NDH-1 also plays a role in inorganic carbon-concentration. The chain is NAD(P)H-quinone oxidoreductase subunit M from Synechococcus sp. (strain CC9605).